The chain runs to 155 residues: Peptide methionine sulfoxide reductase MsrB (155 aa).

Residues 15-137 enclose the MsrB domain; it reads REALIATLNA…NSVSLTFIPT (123 aa). Zn(2+) contacts are provided by cysteine 54, cysteine 57, cysteine 103, and cysteine 106. The Nucleophile role is filled by cysteine 126.

This sequence belongs to the MsrB Met sulfoxide reductase family. Requires Zn(2+) as cofactor.

It carries out the reaction L-methionyl-[protein] + [thioredoxin]-disulfide + H2O = L-methionyl-(R)-S-oxide-[protein] + [thioredoxin]-dithiol. This Xylella fastidiosa (strain M23) protein is Peptide methionine sulfoxide reductase MsrB.